We begin with the raw amino-acid sequence, 154 residues long: Cyclin-dependent protein kinase inhibitor SMR14 (154 aa).

The interval 1–111 is disordered; the sequence is MSKIKIFHLF…RPPRKPKAIP (111 aa). The segment covering 24 to 37 has biased composition (low complexity); that stretch reads SLLVPSKSDSLDSS. Residues 74–83 are compositionally biased toward basic and acidic residues; sequence KWECKDEESP.

Probable cyclin-dependent protein kinase (CDK) inhibitor that functions as a repressor of mitosis in the endoreduplication cell cycle. The sequence is that of Cyclin-dependent protein kinase inhibitor SMR14 from Arabidopsis thaliana (Mouse-ear cress).